The sequence spans 226 residues: 2-C-methyl-D-erythritol 4-phosphate cytidylyltransferase (226 aa).

The protein belongs to the IspD/TarI cytidylyltransferase family. IspD subfamily.

The enzyme catalyses 2-C-methyl-D-erythritol 4-phosphate + CTP + H(+) = 4-CDP-2-C-methyl-D-erythritol + diphosphate. It functions in the pathway isoprenoid biosynthesis; isopentenyl diphosphate biosynthesis via DXP pathway; isopentenyl diphosphate from 1-deoxy-D-xylulose 5-phosphate: step 2/6. Its function is as follows. Catalyzes the formation of 4-diphosphocytidyl-2-C-methyl-D-erythritol from CTP and 2-C-methyl-D-erythritol 4-phosphate (MEP). The chain is 2-C-methyl-D-erythritol 4-phosphate cytidylyltransferase from Thermosipho africanus (strain TCF52B).